The primary structure comprises 998 residues: Beta-galactosidase (998 aa).

Catalysis depends on glutamate 431, which acts as the Proton donor. Residue glutamate 508 is the Nucleophile of the active site.

The protein belongs to the glycosyl hydrolase 2 family.

It carries out the reaction Hydrolysis of terminal non-reducing beta-D-galactose residues in beta-D-galactosides.. The chain is Beta-galactosidase (lacZ) from Lactococcus lactis subsp. lactis (strain IL1403) (Streptococcus lactis).